Reading from the N-terminus, the 328-residue chain is Cytochrome f (328 aa).

Residues 1-44 (MRTFNFLSFPQVHRQALVKAVLVAIATVSLLLTSDVINPQSAQA) form the signal peptide. Residues Y45, C66, C69, and H70 each contribute to the heme site. Residues 294 to 314 (IKGLVLFLGGIMLCQILLVIK) traverse the membrane as a helical segment.

Belongs to the cytochrome f family. The 4 large subunits of the cytochrome b6-f complex are cytochrome b6, subunit IV (17 kDa polypeptide, PetD), cytochrome f and the Rieske protein, while the 4 small subunits are PetG, PetL, PetM and PetN. The complex functions as a dimer. It depends on heme as a cofactor.

It localises to the cellular thylakoid membrane. Its function is as follows. Component of the cytochrome b6-f complex, which mediates electron transfer between photosystem II (PSII) and photosystem I (PSI), cyclic electron flow around PSI, and state transitions. The chain is Cytochrome f from Microcystis aeruginosa (strain NIES-843 / IAM M-2473).